Here is a 318-residue protein sequence, read N- to C-terminus: Ankyrin repeat domain-containing protein 1 (318 aa).

Residues 37–77 (ALEKQEDLKTTSKSLIELEEEKQIKEKQLKSELLKKKLEER) adopt a coiled-coil conformation. ANK repeat units lie at residues 118 to 147 (VDQTTFFKAALDNKMPVIEKYLADGGDPNT), 151 to 180 (YKRTALHRACSEGHTDMVEKLIEAGANIEF), 184 to 213 (LESTALHWTCRGGSVETLKLLLNKGAAINA), 217 to 246 (LLSTPLHVAVRTGHYECAEHLIACEADLHA), 250 to 279 (EGDTPMHDGVRLNRYKMMRLLILYGVDLNI), and 283 to 314 (AGKTPMELVMQWQNGAKEIFNGLQSKSYKNSH).

The protein localises to the nucleus. Its function is as follows. May act as a nuclear transcription factor that negatively regulates the expression of cardiac genes. In Xenopus tropicalis (Western clawed frog), this protein is Ankyrin repeat domain-containing protein 1 (ankrd1).